Consider the following 308-residue polypeptide: MRIVFAGTPEFAVPTLRALIASGHPPCAVYTQPDRPAGRGRKIAPSPVKQLAIEHGLPVFQPASLKGPEERERLVALEPDLMVVVAYGLILPTPVLTVPRFGCVNIHASLLPRWRGAAPIQRAILAGDRETGVTLMRIEPRLDAGPMLGKRSCSIGDDDTTASLHDRLAGLGAEMLIELLPGLAADRLTGEIQDESQVTYAEKIEKSEARLDWQKDATSLSRRVRAFNPWPVAETTLEGTVLRIWSAQVLDPAPDAPPGSIIACTKNLDVACGRGALRILEVQPPGKRRMSAKDFLNAHALAGKRLGT.

(6S)-5,6,7,8-tetrahydrofolate is bound at residue 109–112 (SLLP).

Belongs to the Fmt family.

It catalyses the reaction L-methionyl-tRNA(fMet) + (6R)-10-formyltetrahydrofolate = N-formyl-L-methionyl-tRNA(fMet) + (6S)-5,6,7,8-tetrahydrofolate + H(+). Attaches a formyl group to the free amino group of methionyl-tRNA(fMet). The formyl group appears to play a dual role in the initiator identity of N-formylmethionyl-tRNA by promoting its recognition by IF2 and preventing the misappropriation of this tRNA by the elongation apparatus. The polypeptide is Methionyl-tRNA formyltransferase (Methylococcus capsulatus (strain ATCC 33009 / NCIMB 11132 / Bath)).